The primary structure comprises 333 residues: cGAMP-activated phospholipase (333 aa).

The PNPLA domain occupies 10 to 191 (LALSGGGYRG…VGNAPGLFGL (182 aa)). Positions 14–19 (GGGYRG) match the GXGXXG motif. The GXSXG signature appears at 46 to 50 (GTSAG). The active-site Nucleophile is the serine 48. Catalysis depends on aspartate 178, which acts as the Proton acceptor. The DGA/G motif lies at 178-180 (DGG).

This sequence belongs to the patatin family.

It carries out the reaction a 1,2-diacyl-sn-glycero-3-phosphocholine + H2O = a 2-acyl-sn-glycero-3-phosphocholine + a fatty acid + H(+). The catalysed reaction is 1,2-di-(9Z-octadecenoyl)-sn-glycero-3-phosphoethanolamine + 2 H2O = sn-glycero-3-phosphoethanolamine + 2 (9Z)-octadecenoate + 2 H(+). With respect to regulation, phospholipase activity is specifically activated upon cGAMP binding, which is produced by the cognate cyclic nucleotide synthase encoded in the same operon. Is not activated by cyclic dinucleotides 2',3'-cGAMP, c-diAMP or 3',3'-c-diGMP. In terms of biological role, effector phospholipase of a CBASS antiviral system. CBASS (cyclic oligonucleotide-based antiphage signaling system) provides immunity against bacteriophages. The CD-NTase protein (CdnA) synthesizes cyclic nucleotides in response to infection; these serve as specific second messenger signals. The signals activate a diverse range of effectors, leading to bacterial cell death and thus abortive phage infection. A type II-A(GA) CBASS system. Phospholipase that is activated upon binding to the cyclic dinucleotide (CDN) second messenger 3',3'-cyclic GMP-AMP (cGAMP). Degrades phospholipids in the cell membrane. Its function is as follows. The capV-cdnA-cap2-cap3 operon provides about 10(4)-fold protection in strain BWHPSA011 against infection by phage PaMx41. In P.aeruginosa strain PAO1 it confers protection against phages PaMx41 and JBD18 but not JBD67 (JBD18 and JBD67 do not replicate in BWHPSA011 / Pa011). When acb2 in JBD67 is deleted this CBASS operon then protects against JDB67 also. This CBASS system limits prophage induction of lysogenized JBD67 as well as viral lytic replication. The protein is cGAMP-activated phospholipase of Pseudomonas aeruginosa (strain BWHPSA011 / Pa011).